We begin with the raw amino-acid sequence, 373 residues long: Integrator complex subunit 15 (373 aa).

It belongs to the Integrator subunit 15 family. In terms of assembly, belongs to the multiprotein complex Integrator, at least composed of IntS1, IntS2, IntS3, IntS4, omd/IntS5, IntS6, defl/IntS7, IntS8, IntS9, IntS10, IntS11, IntS12, asun/IntS13, IntS14 and IntS15. The core complex associates with protein phosphatase 2A subunits mts/PP2A and Pp2A-29B, to form the Integrator-PP2A (INTAC) complex.

Its subcellular location is the nucleus. Functionally, component of the integrator complex, a multiprotein complex that terminates RNA polymerase II (Pol II) transcription in the promoter-proximal region of genes. The integrator complex provides a quality checkpoint during transcription elongation by driving premature transcription termination of transcripts that are unfavorably configured for transcriptional elongation: the complex terminates transcription by (1) catalyzing dephosphorylation of the C-terminal domain (CTD) of Pol II subunit Rbp1 and Spt5, and (2) degrading the exiting nascent RNA transcript via endonuclease activity. The integrator complex is also involved in the 3'-end processing of the U7 snRNA, and also the spliceosomal snRNAs U1, U2, U4 and U5. The sequence is that of Integrator complex subunit 15 from Drosophila melanogaster (Fruit fly).